The sequence spans 404 residues: 4-hydroxy-3-methylbut-2-enyl diphosphate reductase (404 aa).

Cys-66 lines the [4Fe-4S] cluster pocket. Position 96 (His-96) interacts with (2E)-4-hydroxy-3-methylbut-2-enyl diphosphate. A dimethylallyl diphosphate-binding site is contributed by His-96. His-96 is an isopentenyl diphosphate binding site. Cys-157 is a [4Fe-4S] cluster binding site. A (2E)-4-hydroxy-3-methylbut-2-enyl diphosphate-binding site is contributed by His-185. His-185 lines the dimethylallyl diphosphate pocket. Residue His-185 participates in isopentenyl diphosphate binding. Glu-187 (proton donor) is an active-site residue. Residue Thr-250 participates in (2E)-4-hydroxy-3-methylbut-2-enyl diphosphate binding. Cys-288 serves as a coordination point for [4Fe-4S] cluster. (2E)-4-hydroxy-3-methylbut-2-enyl diphosphate is bound by residues Ser-317, Ser-318, Asn-319, and Ser-380. Ser-317, Ser-318, Asn-319, and Ser-380 together coordinate dimethylallyl diphosphate. Ser-317, Ser-318, Asn-319, and Ser-380 together coordinate isopentenyl diphosphate.

The protein belongs to the IspH family. Requires [4Fe-4S] cluster as cofactor.

The enzyme catalyses isopentenyl diphosphate + 2 oxidized [2Fe-2S]-[ferredoxin] + H2O = (2E)-4-hydroxy-3-methylbut-2-enyl diphosphate + 2 reduced [2Fe-2S]-[ferredoxin] + 2 H(+). The catalysed reaction is dimethylallyl diphosphate + 2 oxidized [2Fe-2S]-[ferredoxin] + H2O = (2E)-4-hydroxy-3-methylbut-2-enyl diphosphate + 2 reduced [2Fe-2S]-[ferredoxin] + 2 H(+). The protein operates within isoprenoid biosynthesis; dimethylallyl diphosphate biosynthesis; dimethylallyl diphosphate from (2E)-4-hydroxy-3-methylbutenyl diphosphate: step 1/1. Its pathway is isoprenoid biosynthesis; isopentenyl diphosphate biosynthesis via DXP pathway; isopentenyl diphosphate from 1-deoxy-D-xylulose 5-phosphate: step 6/6. Catalyzes the conversion of 1-hydroxy-2-methyl-2-(E)-butenyl 4-diphosphate (HMBPP) into a mixture of isopentenyl diphosphate (IPP) and dimethylallyl diphosphate (DMAPP). Acts in the terminal step of the DOXP/MEP pathway for isoprenoid precursor biosynthesis. The protein is 4-hydroxy-3-methylbut-2-enyl diphosphate reductase of Prochlorococcus marinus (strain MIT 9211).